The sequence spans 290 residues: UPF0761 membrane protein YihY (290 aa).

6 helical membrane passes run 44–64 (LLSL…FPMF), 104–124 (VGAC…DSAL), 140–160 (FAVY…SLAI), 183–203 (IFPL…VPTI), 210–230 (AIVG…GFAL), and 244–264 (VLAV…IVLL).

Belongs to the UPF0761 family.

It localises to the cell inner membrane. The sequence is that of UPF0761 membrane protein YihY from Escherichia coli O7:K1 (strain IAI39 / ExPEC).